The chain runs to 709 residues: Polyribonucleotide nucleotidyltransferase (709 aa).

Residues D486 and D492 each contribute to the Mg(2+) site. The 60-residue stretch at 553–612 folds into the KH domain; that stretch reads PRIHTIKINPDKIKDVIGKGGSVIRALTEETGTTIEIEDDGTVKIAATDGEKAKHAISRI. Positions 622–690 constitute an S1 motif domain; it reads GRIYAGKVTR…RQGRVRLSIK (69 aa).

This sequence belongs to the polyribonucleotide nucleotidyltransferase family. In terms of assembly, component of the RNA degradosome, which is a multiprotein complex involved in RNA processing and mRNA degradation. Mg(2+) serves as cofactor.

The protein localises to the cytoplasm. It carries out the reaction RNA(n+1) + phosphate = RNA(n) + a ribonucleoside 5'-diphosphate. Involved in mRNA degradation. Catalyzes the phosphorolysis of single-stranded polyribonucleotides processively in the 3'- to 5'-direction. The polypeptide is Polyribonucleotide nucleotidyltransferase (Photorhabdus luminescens (Xenorhabdus luminescens)).